Reading from the N-terminus, the 384-residue chain is Guanine nucleotide-binding protein alpha-1 subunit (384 aa).

Gly2 carries the N-myristoyl glycine lipid modification. Cys5 carries the S-palmitoyl cysteine lipid modification. The G-alpha domain occupies 38-384 (HIRKLLLLGA…RRNLFEAGLL (347 aa)). The segment at 41 to 54 (KLLLLGAGESGKST) is G1 motif. Glu49, Ser50, Gly51, Lys52, Ser53, Thr54, Asp163, Leu188, Thr194, Gly222, Asn288, Lys289, Asp291, and Ala356 together coordinate GTP. Ser53 serves as a coordination point for Mg(2+). A G2 motif region spans residues 186–194 (DVLLARVRT). Thr194 contacts Mg(2+). Residues 215–224 (YRLFDVGGQR) are G3 motif. The tract at residues 284-291 (MLFLNKFD) is G4 motif. The G5 motif stretch occupies residues 354–359 (TTALDQ).

Belongs to the G-alpha family. In terms of assembly, g proteins are composed of 3 units; alpha, beta and gamma. The alpha chain contains the guanine nucleotide binding site. It depends on Mg(2+) as a cofactor.

Guanine nucleotide-binding proteins (G proteins) are involved as modulators or transducers in various transmembrane signaling systems. In Pisum sativum (Garden pea), this protein is Guanine nucleotide-binding protein alpha-1 subunit (GPA1).